The chain runs to 123 residues: Small ribosomal subunit protein uS12 (123 aa).

A 3-methylthioaspartic acid modification is found at Asp89.

Belongs to the universal ribosomal protein uS12 family. Part of the 30S ribosomal subunit. Contacts proteins S8 and S17. May interact with IF1 in the 30S initiation complex.

Its function is as follows. With S4 and S5 plays an important role in translational accuracy. Interacts with and stabilizes bases of the 16S rRNA that are involved in tRNA selection in the A site and with the mRNA backbone. Located at the interface of the 30S and 50S subunits, it traverses the body of the 30S subunit contacting proteins on the other side and probably holding the rRNA structure together. The combined cluster of proteins S8, S12 and S17 appears to hold together the shoulder and platform of the 30S subunit. This chain is Small ribosomal subunit protein uS12, found in Bartonella bacilliformis (strain ATCC 35685 / KC583 / Herrer 020/F12,63).